The sequence spans 342 residues: UHRF1-like protein (342 aa).

The interval 41–149 (SEATTLATPS…SHPGSEEEDI (109 aa)) is disordered. Polar residues predominate over residues 42–59 (EATTLATPSNLKTAGNQR). The segment covering 74-90 (NRSDSPRKRPTKDREDL) has biased composition (basic and acidic residues). The span at 115 to 141 (TREQVTFNSDRDTPNTPSRQIKSTHSH) shows a compositional bias: polar residues. A YDG domain is found at 168-322 (GHIPGIGVGK…LMVCRYAFKR (155 aa)). D218 contacts DNA. The segment at 236-257 (KGTKQNPKNLRTAPQTSHQSFD) is disordered. Residues 238-257 (TKQNPKNLRTAPQTSHQSFD) show a composition bias toward polar residues.

It localises to the nucleus. Functionally, involved in the maintenance of DNA methylation. Binds hemimethylated DNA. The protein is UHRF1-like protein of Cryptococcus neoformans var. grubii serotype A (strain H99 / ATCC 208821 / CBS 10515 / FGSC 9487) (Filobasidiella neoformans var. grubii).